The sequence spans 169 residues: MAGDMRKITLEKVVLNMGVGQSGNAVEVAKRALGEISGKKPCGRDAHETQRDFGVRKGEPIGAAVTIRGEDAGALARRLFEAKGGQVKGRSFDDFGNFSFGIGEHIDIPGIKYDPGIGILGLDVCMTLSRPGYGIRKRSKHKARVGRSHRITATEAKDFVVREFGVEIV.

It belongs to the universal ribosomal protein uL5 family. As to quaternary structure, part of the 50S ribosomal subunit; contacts the 5S rRNA and probably tRNA. Forms a bridge to the 30S subunit in the 70S ribosome.

This is one of the proteins that bind and probably mediate the attachment of the 5S RNA into the large ribosomal subunit, where it forms part of the central protuberance. In the 70S ribosome it contacts protein S13 of the 30S subunit (bridge B1b), connecting the 2 subunits; this bridge is implicated in subunit movement. May contact the P site tRNA; the 5S rRNA and some of its associated proteins might help stabilize positioning of ribosome-bound tRNAs. The polypeptide is Large ribosomal subunit protein uL5 (Cenarchaeum symbiosum (strain A)).